Reading from the N-terminus, the 459-residue chain is uncharacterized protein (459 aa).

Residue histidine 79 participates in Zn(2+) binding. Glutamate 82 serves as the catalytic Proton acceptor. Histidine 83 and glutamate 159 together coordinate Zn(2+).

This sequence belongs to the peptidase M16 family. Zn(2+) is required as a cofactor.

This is an uncharacterized protein from Streptomyces coelicolor (strain ATCC BAA-471 / A3(2) / M145).